Here is a 259-residue protein sequence, read N- to C-terminus: Imidazole glycerol phosphate synthase subunit HisF (259 aa).

Active-site residues include aspartate 11 and aspartate 130.

Belongs to the HisA/HisF family. In terms of assembly, heterodimer of HisH and HisF.

The protein resides in the cytoplasm. It carries out the reaction 5-[(5-phospho-1-deoxy-D-ribulos-1-ylimino)methylamino]-1-(5-phospho-beta-D-ribosyl)imidazole-4-carboxamide + L-glutamine = D-erythro-1-(imidazol-4-yl)glycerol 3-phosphate + 5-amino-1-(5-phospho-beta-D-ribosyl)imidazole-4-carboxamide + L-glutamate + H(+). It functions in the pathway amino-acid biosynthesis; L-histidine biosynthesis; L-histidine from 5-phospho-alpha-D-ribose 1-diphosphate: step 5/9. In terms of biological role, IGPS catalyzes the conversion of PRFAR and glutamine to IGP, AICAR and glutamate. The HisF subunit catalyzes the cyclization activity that produces IGP and AICAR from PRFAR using the ammonia provided by the HisH subunit. This Lactococcus lactis subsp. cremoris (strain MG1363) protein is Imidazole glycerol phosphate synthase subunit HisF.